The primary structure comprises 66 residues: Antitoxin RelB2 (66 aa).

Its function is as follows. Antitoxin component of a type II toxin-antitoxin (TA) system. Neutralizes the effect of cognate toxin RelE2, but no other RelE or ParE toxin. In Caulobacter vibrioides (strain ATCC 19089 / CIP 103742 / CB 15) (Caulobacter crescentus), this protein is Antitoxin RelB2 (relB2).